The primary structure comprises 307 residues: Transcription factor bHLH127 (307 aa).

Disordered stretches follow at residues 41–68 and 101–155; these read SDPL…LPHQ and PHPQ…AEMH. Residues 110–119 show a composition bias toward pro residues; sequence APPPPKPPSS. One can recognise a bHLH domain in the interval 150-199; the sequence is RAAEMHNLAERRRREKINERMKTLQQLIPRCNKSTKVSMLEDVIEYVKSL.

It belongs to the bHLH protein family. Homodimer.

It is found in the nucleus. This is Transcription factor bHLH127 (BHLH127) from Arabidopsis thaliana (Mouse-ear cress).